We begin with the raw amino-acid sequence, 613 residues long: tRNA (uracil-5-)-methyltransferase homolog A (613 aa).

Residues 1–46 are disordered; it reads MSEPAAEVPEPMEDCGQDASAVPSSAAPLCQKEEAGPGPAAGPGTQ. The region spanning 63–136 is the RRM domain; it reads FKLELQNVPR…CPLSVRLARP (74 aa). A coiled-coil region spans residues 170-200; that stretch reads YTEQLEQKRLECERVLQKLAKEIGNTNRALL. Residue Ser368 is modified to Phosphoserine. Gln401, Glu451, and Asp500 together coordinate S-adenosyl-L-methionine. The Nucleophile role is filled by Cys528. Glu571 serves as the catalytic Proton acceptor.

This sequence belongs to the class I-like SAM-binding methyltransferase superfamily. RNA M5U methyltransferase family. In terms of tissue distribution, widely expressed at low level. Expressed at higher level in proliferating cells.

Its subcellular location is the cytoplasm. It is found in the cytosol. It catalyses the reaction uridine(54) in tRNA + S-adenosyl-L-methionine = 5-methyluridine(54) in tRNA + S-adenosyl-L-homocysteine + H(+). The enzyme catalyses a uridine in mRNA + S-adenosyl-L-methionine = a 5-methyluridine in mRNA + S-adenosyl-L-homocysteine + H(+). In terms of biological role, S-adenosyl-L-methionine-dependent methyltransferase that catalyzes the formation of 5-methyl-uridine in tRNAs and some mRNAs. Mainly catalyzes the methylation of uridine at position 54 (m5U54) in cytosolic tRNAs. Also able to mediate the formation of 5-methyl-uridine in some mRNAs. The protein is tRNA (uracil-5-)-methyltransferase homolog A of Mus musculus (Mouse).